A 133-amino-acid polypeptide reads, in one-letter code: Phosphoribosyl-AMP cyclohydrolase (133 aa).

Asp77 contributes to the Mg(2+) binding site. Residue Cys78 coordinates Zn(2+). Mg(2+) contacts are provided by Asp79 and Asp81. Zn(2+)-binding residues include Cys95 and Cys102.

It belongs to the PRA-CH family. Homodimer. Mg(2+) serves as cofactor. It depends on Zn(2+) as a cofactor.

The protein resides in the cytoplasm. It catalyses the reaction 1-(5-phospho-beta-D-ribosyl)-5'-AMP + H2O = 1-(5-phospho-beta-D-ribosyl)-5-[(5-phospho-beta-D-ribosylamino)methylideneamino]imidazole-4-carboxamide. It functions in the pathway amino-acid biosynthesis; L-histidine biosynthesis; L-histidine from 5-phospho-alpha-D-ribose 1-diphosphate: step 3/9. In terms of biological role, catalyzes the hydrolysis of the adenine ring of phosphoribosyl-AMP. The chain is Phosphoribosyl-AMP cyclohydrolase from Thiobacillus denitrificans (strain ATCC 25259 / T1).